The sequence spans 171 residues: Putative pre-16S rRNA nuclease (171 aa).

This sequence belongs to the YqgF nuclease family.

It is found in the cytoplasm. Functionally, could be a nuclease involved in processing of the 5'-end of pre-16S rRNA. The sequence is that of Putative pre-16S rRNA nuclease from Corynebacterium diphtheriae (strain ATCC 700971 / NCTC 13129 / Biotype gravis).